The primary structure comprises 400 residues: MSVYQATASAPVNIACIKYWGKRDTKLILPTNSSLSVTLDQDHLRSTTTARADPSFQKDRLWLNGTEDEIKDGGRLATCIKEMKALRKQLEDKDASLPKISSYSVHISSRNNFPTAAGLASSASGFAALVASLAALYKLPTSQSDLSRIARQGSGSACRSLFGGFVAWQMGELPDGSDSLAVEIAPREHWPDIHALICVVNDEKKGTSSTAGMQRTVETSPLLQHRIKHVVPARMAAISAAIRTRDFDAFARITMQDSNQFHAVALDTEPPIFYMNDVSRAIIALIVEYNRVAVEKTGKLKAAYTYDAGPNAVIYTPKEHIKEIVELIVKYFPQAENFKDPFGLFGAAGVQGKVVDGFNEAVSKPFGVGAVKGLIHTRVGDGPRTLGPEEALLSPDGLPK.

(R)-5-diphosphomevalonate is bound by residues 19 to 22 (YWGK), R75, 154 to 159 (SGSACR), and T210. The segment at 381-400 (DGPRTLGPEEALLSPDGLPK) is disordered.

Belongs to the diphosphomevalonate decarboxylase family.

The enzyme catalyses (R)-5-diphosphomevalonate + ATP = isopentenyl diphosphate + ADP + phosphate + CO2. The protein operates within isoprenoid biosynthesis; isopentenyl diphosphate biosynthesis via mevalonate pathway; isopentenyl diphosphate from (R)-mevalonate: step 3/3. Functionally, diphosphomevalonate decarboxylase; part of the second module of ergosterol biosynthesis pathway that includes the middle steps of the pathway. The second module involves the formation of farnesyl diphosphate, which is also an important intermediate in the biosynthesis of ubiquinone, dolichol, heme and prenylated proteins. This module also plays a key role in the biosynthesis of triterpenes such as ganoderic acids (GA), a group of highly oxygenated lanostane-type triterpenoids which are well recognized as a main group of unique bioactive compounds in the medicinal mushroom Ganoderma lucidum. Activity by the mevalonate kinase first converts mevalonate into 5-phosphomevalonate. 5-phosphomevalonate is then further converted to 5-diphosphomevalonate by the phosphomevalonate kinase. The diphosphomevalonate decarboxylase MVD then produces isopentenyl diphosphate. The isopentenyl-diphosphate delta-isomerase then catalyzes the 1,3-allylic rearrangement of the homoallylic substrate isopentenyl (IPP) to its highly electrophilic allylic isomer, dimethylallyl diphosphate (DMAPP). Finally the farnesyl diphosphate synthase FPS catalyzes the sequential condensation of isopentenyl pyrophosphate with dimethylallyl pyrophosphate, and then with the resultant geranylpyrophosphate to the ultimate product farnesyl pyrophosphate. The sequence is that of Diphosphomevalonate decarboxylase from Ganoderma lucidum (Ling zhi medicinal fungus).